Here is a 439-residue protein sequence, read N- to C-terminus: S-layer protein (439 aa).

An N-terminal signal peptide occupies residues 1–30 (MKKNLRIVSAAAAALLAVAPIAATAMPVNA).

Post-translationally, glycosylated.

Its subcellular location is the secreted. It localises to the cell wall. The protein localises to the S-layer. In terms of biological role, the S-layer is a paracrystalline mono-layered assembly of proteins which coat the surface of bacteria. The protein is S-layer protein (slpH) of Lactobacillus helveticus (Lactobacillus suntoryeus).